The following is a 1050-amino-acid chain: Ankyrin repeat domain-containing protein 27 (1050 aa).

The interval 1–372 (MALYDEDLLK…RQGSLSAKPP (372 aa)) is sufficient for GEF activity towards RAB21. In terms of domain architecture, VPS9 spans 233–371 (ASEDAAFNKI…IRQGSLSAKP (139 aa)). ANK repeat units follow at residues 396–426 (SPTDCLFKHIASGNQKEVERLLSQEDHDKDT), 462–491 (RGHTPLHVAAVCGQASLIDLLVSKGAMVNA), 495–524 (HGATPLHLACQKGYQSVTLLLLHYKASAEV), 528–560 (NGNTPLHLACTYGHEDCVKALVYYDVESCRLDI), 564–593 (KGDTPLHIAARWGYQGVIETLLQNGASTEI), and 597–627 (LKETPLKCALNSKILSVMEAYHLSFERRQKS). The sufficient for interaction with VPS29 stretch occupies residues 396–460 (SPTDCLFKHI…PSVVTPFSRD (65 aa)). The tract at residues 451-600 (PSVVTPFSRD…TEIQNRLKET (150 aa)) is interaction with RAB38. An interaction with RAB32 region spans residues 451-730 (PSVVTPFSRD…APAQKRLAKV (280 aa)). The segment at 625-665 (QKSSEAPVQSPQRSVDSISQESSTSSFSSMSASSRQEETKK) is disordered. The span at 628 to 637 (SEAPVQSPQR) shows a compositional bias: polar residues. Over residues 638–658 (SVDSISQESSTSSFSSMSASS) the composition is skewed to low complexity. Positions 658–707 (SRQEETKKDYREVEKLLRAVADGDLEMVRYLLEWTEEDLEDAEDTVSAAD) are required for interaction with VAMP7. ANK repeat units follow at residues 668 to 698 (REVEKLLRAVADGDLEMVRYLLEWTEEDLED), 743 to 772 (DGSSPLHVAALHGRADLIPLLLKHGANAGA), 776 to 805 (DQAVPLHLACQQGHFQVVKCLLDSNAKPNK), 809 to 838 (SGNTPLIYACSGGHHELVALLLQHGASINA), and 842 to 871 (KGNTALHEAVIEKHVFVVELLLLHGASVQV). The interval 692–746 (TEEDLEDAEDTVSAADPEFCHPLCQCPKCAPAQKRLAKVPASGLGVNVTSQDGSS) is sufficient for interaction with VPS29. Phosphoserine occurs at positions 962 and 970. A disordered region spans residues 987–1050 (PAQSGSHAAE…TPQEVSASRS (64 aa)). Positions 994–1004 (AAEKGNSDWPE) are enriched in basic and acidic residues. The residue at position 1023 (Thr1023) is a Phosphothreonine. Residues 1040 to 1050 (STPQEVSASRS) show a composition bias toward polar residues.

Interacts with RAB21 (GDP-bound form), VPS29, RAB32 (GTP-bound form), RAB38 (GTP-bound form), VAMP7, KIF5A, KIF5C, GOLGA4. Interacts with low affinity with RAB5. ANKRD27:RAB32 heterodimers can homodimerize to form tetramers. Can interact with RAB38 or RAB32, VPS29 and VAMP7 simultaneously. A decreased interaction with RAB32 seen in the presence of SGSM2.

The protein resides in the early endosome. Its subcellular location is the late endosome. The protein localises to the cytoplasmic vesicle membrane. It localises to the lysosome. It is found in the cell membrane. The protein resides in the melanosome. In terms of biological role, may be a guanine exchange factor (GEF) for Rab21, Rab32 and Rab38 and regulate endosome dynamics. May regulate the participation of VAMP7 in membrane fusion events; in vitro inhibits VAMP7-mediated SNARE complex formation by trapping VAMP7 in a closed, fusogenically inactive conformation. Involved in peripheral melanosomal distribution of TYRP1 in melanocytes; the function, which probably is implicating vesicle-trafficking, includes cooperation with Rab32, Rab38 and VAMP7. Involved in the regulation of neurite growth; the function seems to require its GEF activity, probably towards Rab21, and VAMP7 but not Rab32/38. Proposed to be involved in Golgi sorting of VAMP7 and transport of VAMP7 vesicles to the cell surface; the function seems to implicate kinesin heavy chain isoform 5 proteins, GOLGA4, RAB21 and MACF1. Required for the colocalization of VAMP7 and Rab21, probably on TGN sites. Involved in GLUT1 endosome-to-plasma membrane trafficking; the function is dependent of association with VPS29. Regulates the proper trafficking of melanogenic enzymes TYR, TYRP1 and DCT/TYRP2 to melanosomes in melanocytes. The protein is Ankyrin repeat domain-containing protein 27 (ANKRD27) of Homo sapiens (Human).